The sequence spans 76 residues: Large ribosomal subunit protein bL31 (76 aa).

Zn(2+)-binding residues include Cys-16, Cys-18, Cys-36, and Cys-39.

Belongs to the bacterial ribosomal protein bL31 family. Type A subfamily. As to quaternary structure, part of the 50S ribosomal subunit. Zn(2+) serves as cofactor.

Binds the 23S rRNA. This Syntrophobacter fumaroxidans (strain DSM 10017 / MPOB) protein is Large ribosomal subunit protein bL31.